Consider the following 182-residue polypeptide: uncharacterized protein (182 aa).

The segment at 151–172 is disordered; the sequence is RGPGKPFADEKPCPRERPPADQ. The span at 157–169 shows a compositional bias: basic and acidic residues; the sequence is FADEKPCPRERPP.

This is an uncharacterized protein from Mycobacterium tuberculosis (strain CDC 1551 / Oshkosh).